The following is a 1343-amino-acid chain: DNA-directed RNA polymerase subunit beta (1343 aa).

It belongs to the RNA polymerase beta chain family. In terms of assembly, the RNAP catalytic core consists of 2 alpha, 1 beta, 1 beta' and 1 omega subunit. When a sigma factor is associated with the core the holoenzyme is formed, which can initiate transcription.

The enzyme catalyses RNA(n) + a ribonucleoside 5'-triphosphate = RNA(n+1) + diphosphate. In terms of biological role, DNA-dependent RNA polymerase catalyzes the transcription of DNA into RNA using the four ribonucleoside triphosphates as substrates. This chain is DNA-directed RNA polymerase subunit beta, found in Shewanella denitrificans (strain OS217 / ATCC BAA-1090 / DSM 15013).